Here is a 604-residue protein sequence, read N- to C-terminus: Aspartate--tRNA(Asp/Asn) ligase (604 aa).

Glu169 provides a ligand contact to L-aspartate. An aspartate region spans residues 193-196 (QLFK). Arg215 contacts L-aspartate. Residues 215-217 (RDE) and Gln224 each bind ATP. Residue His456 coordinates L-aspartate. ATP is bound at residue Glu490. Arg497 serves as a coordination point for L-aspartate. 542 to 545 (GWDR) is an ATP binding site. Positions 571–604 (PLTGAPAPITAQQRKEAGVDAQPEPKQAEAEPEA) are disordered.

The protein belongs to the class-II aminoacyl-tRNA synthetase family. Type 1 subfamily. Homodimer.

The protein resides in the cytoplasm. It catalyses the reaction tRNA(Asx) + L-aspartate + ATP = L-aspartyl-tRNA(Asx) + AMP + diphosphate. Functionally, aspartyl-tRNA synthetase with relaxed tRNA specificity since it is able to aspartylate not only its cognate tRNA(Asp) but also tRNA(Asn). Reaction proceeds in two steps: L-aspartate is first activated by ATP to form Asp-AMP and then transferred to the acceptor end of tRNA(Asp/Asn). The polypeptide is Aspartate--tRNA(Asp/Asn) ligase (Micrococcus luteus (strain ATCC 4698 / DSM 20030 / JCM 1464 / CCM 169 / CCUG 5858 / IAM 1056 / NBRC 3333 / NCIMB 9278 / NCTC 2665 / VKM Ac-2230) (Micrococcus lysodeikticus)).